The primary structure comprises 754 residues: DNA repair protein RAD4 (754 aa).

Positions 23 to 51 are disordered; sequence EKAPLSRRRRVRRKNQPLPDAKKKFKTGL. The span at 27–37 shows a compositional bias: basic residues; that stretch reads LSRRRRVRRKN. The DNA-binding element occupies 250–269; it reads DFLRAVSKGHGDPDISVQGF. Residues 701 to 754 are disordered; the sequence is IANHEARPYSEPSEPEDSLDYVSVDKAEESATDDDVGEDYSDFMKELEMSEESD. Acidic residues predominate over residues 730–741; the sequence is SATDDDVGEDYS.

Belongs to the XPC family.

It localises to the cytoplasm. The protein resides in the nucleus. Its function is as follows. Involved in nucleotide excision repair of DNA damaged with UV light, bulky adducts, or cross-linking agents. The protein is DNA repair protein RAD4 (RAD4) of Saccharomyces cerevisiae (strain ATCC 204508 / S288c) (Baker's yeast).